The chain runs to 351 residues: MSGLIAYCRQGFEPELAAELRDRAVLLGIAGDIYAQRNHGFVLLRCDPLHVDTLLQQLHWRRLIFARQTLRLHAELKTLNSRDRIAPILAALPKTPCFGDLWIEYPDSDMGKPLAGLARSFGNALRPVLRSAGRLSAQLHPQWPRLHVCFLSGDHVLLGSTRSVDSAPWQLGIPRLKLLPEAPSRSALKLEEALITLLTPNEREAKLRPGMQATDLGAAPGGWTWVLIRQHLRVTSIDNAALRPPLLNHPLVQHVRADGFRWTPPRPMDWMVCDMVEQPRRVAERMAVWLREGWCRHMIFNLKLPMKKRWDETRLCLERFETQAAVPLTLRAKQLYHDREEITVYASNDAR.

S-adenosyl-L-methionine is bound by residues Ser-186, 219 to 222, Asp-238, Asp-258, and Asp-274; that span reads APGG. The active-site Proton acceptor is Lys-303.

It belongs to the class I-like SAM-binding methyltransferase superfamily. RNA methyltransferase RlmE family. RlmM subfamily. Monomer.

It is found in the cytoplasm. It carries out the reaction cytidine(2498) in 23S rRNA + S-adenosyl-L-methionine = 2'-O-methylcytidine(2498) in 23S rRNA + S-adenosyl-L-homocysteine + H(+). Catalyzes the 2'-O-methylation at nucleotide C2498 in 23S rRNA. The sequence is that of Ribosomal RNA large subunit methyltransferase M from Xylella fastidiosa (strain M12).